A 369-amino-acid chain; its full sequence is MSSSRKRLGVFTSGGDCPGLNTAIRAIVAHATLSYGWEVLGILHATQGLIERKAIPLNAEGLGGMDVLLNMGGTILGAINKGDTLGHADEVIAGYYELGLDALIAICGDGSLRILHQLAQKGNWNFLAIPKTIDNDVALTDRAIGFDTAVNTVVEALNRITSTAASHDRVFVVEVMGRTAGHLALYSGIAGGADIILIPEIPYSIEGICQHLQKLRDRWGRQFALIVVAEGSKQLEEDANHPRHCSIGQYIADKIAQHSPIPIELRVSVLGHIQRGGAPMAMDRLLAAGMGNTAVDLAAQGTFGRMVAWQAGQVVTVPIADVVAKCPRHVDPNSFLIRTAQGLGIYVGDKPMLPYVDPTLCRDQVICAI.

ATP is bound by residues glycine 15, 81-82 (KG), and 108-111 (GDGS). Residue aspartate 109 participates in Mg(2+) binding. Residues 132–134 (TID), arginine 169, 176–178 (MGR), glutamate 230, arginine 266, and 272–275 (HIQR) contribute to the substrate site. The active-site Proton acceptor is the aspartate 134.

Belongs to the phosphofructokinase type A (PFKA) family. Mixed-substrate PFK group III subfamily. As to quaternary structure, homodimer or homotetramer. The cofactor is Mg(2+).

The protein resides in the cytoplasm. It carries out the reaction beta-D-fructose 6-phosphate + ATP = beta-D-fructose 1,6-bisphosphate + ADP + H(+). The protein operates within carbohydrate degradation; glycolysis; D-glyceraldehyde 3-phosphate and glycerone phosphate from D-glucose: step 3/4. Its function is as follows. Catalyzes the phosphorylation of D-fructose 6-phosphate to fructose 1,6-bisphosphate by ATP, the first committing step of glycolysis. The chain is ATP-dependent 6-phosphofructokinase from Thermosynechococcus vestitus (strain NIES-2133 / IAM M-273 / BP-1).